The following is a 213-amino-acid chain: Ribonuclease HII (213 aa).

Residues 2-213 (GRVAGIDEAG…KEWATWKRLR (212 aa)) form the RNase H type-2 domain. Residues Asp8, Glu9, and Asp113 each coordinate a divalent metal cation.

The protein belongs to the RNase HII family. Requires Mn(2+) as cofactor. It depends on Mg(2+) as a cofactor.

The protein resides in the cytoplasm. The enzyme catalyses Endonucleolytic cleavage to 5'-phosphomonoester.. In terms of biological role, endonuclease that specifically degrades the RNA of RNA-DNA hybrids. The sequence is that of Ribonuclease HII from Thermofilum pendens (strain DSM 2475 / Hrk 5).